The primary structure comprises 314 residues: uncharacterized protein (314 aa).

Composition is skewed to basic residues over residues 1-16 (MAGNSKRRGAVRKAGT) and 49-65 (AAKRAAKAAKQQQRRPA). The interval 1 to 73 (MAGNSKRRGA…PARKTDETEL (73 aa)) is disordered. 3 residues coordinate S-adenosyl-L-methionine: glycine 266, isoleucine 286, and leucine 295.

Belongs to the class IV-like SAM-binding methyltransferase superfamily. RNA methyltransferase TrmH family.

This is an uncharacterized protein from Mycobacterium sp. (strain KMS).